A 108-amino-acid polypeptide reads, in one-letter code: Ribonuclease P protein component (108 aa).

Belongs to the RnpA family. As to quaternary structure, consists of a catalytic RNA component (M1 or rnpB) and a protein subunit.

The catalysed reaction is Endonucleolytic cleavage of RNA, removing 5'-extranucleotides from tRNA precursor.. Its function is as follows. RNaseP catalyzes the removal of the 5'-leader sequence from pre-tRNA to produce the mature 5'-terminus. It can also cleave other RNA substrates such as 4.5S RNA. The protein component plays an auxiliary but essential role in vivo by binding to the 5'-leader sequence and broadening the substrate specificity of the ribozyme. This chain is Ribonuclease P protein component, found in Campylobacter jejuni subsp. doylei (strain ATCC BAA-1458 / RM4099 / 269.97).